We begin with the raw amino-acid sequence, 86 residues long: Cell division topological specificity factor (86 aa).

Belongs to the MinE family.

Functionally, prevents the cell division inhibition by proteins MinC and MinD at internal division sites while permitting inhibition at polar sites. This ensures cell division at the proper site by restricting the formation of a division septum at the midpoint of the long axis of the cell. This Shewanella pealeana (strain ATCC 700345 / ANG-SQ1) protein is Cell division topological specificity factor.